Consider the following 383-residue polypeptide: tRNA-specific 2-thiouridylase MnmA (383 aa).

ATP-binding positions include 31 to 38 (GLSGGVDS) and L57. C118 functions as the Nucleophile in the catalytic mechanism. A disulfide bond links C118 and C217. G143 contacts ATP. The interaction with tRNA stretch occupies residues 167 to 169 (KDQ). The Cysteine persulfide intermediate role is filled by C217. Residues 322–323 (RY) are interaction with tRNA.

The protein belongs to the MnmA/TRMU family.

The protein localises to the cytoplasm. The enzyme catalyses S-sulfanyl-L-cysteinyl-[protein] + uridine(34) in tRNA + AH2 + ATP = 2-thiouridine(34) in tRNA + L-cysteinyl-[protein] + A + AMP + diphosphate + H(+). Its function is as follows. Catalyzes the 2-thiolation of uridine at the wobble position (U34) of tRNA, leading to the formation of s(2)U34. This chain is tRNA-specific 2-thiouridylase MnmA, found in Synechococcus sp. (strain RCC307).